A 316-amino-acid polypeptide reads, in one-letter code: MSFASETKKELTNLEVKDCCINAELSALIRMNGALSFTNRHLVLDVQTENAAIARRIYTLLKKQYDVSVELLVRKKMRLKKNNVYIVRFSENAKAILEDLKILGENFVFERSISKELVKKRCCKRSYMRGAFLAGGSVNNPETSSYHLEIFSLYKEHNDSLCDLLNEFQLNSKTLERKKGYITYLKEAEKITEFLNVIGAHNSLLRFEDVRIVRDMRNSVNRLVNCETANLNKTIGASLRQVENIKYIDERIGLEALPEKLREIAQLRIDYQEVTLKELGEMVASGKISKSGINHRLRKLDEIAEQLRTGQTVTLK.

The segment at residues 275–309 (TLKELGEMVASGKISKSGINHRLRKLDEIAEQLRT) is a DNA-binding region (H-T-H motif).

Belongs to the WhiA family.

It is found in the cytoplasm. Its subcellular location is the nucleoid. Its function is as follows. Involved in cell division and chromosome segregation. May influence the activity of FtsZ. Binds DNA, but does not seem to function as a transcription factor. In Bacillus subtilis (strain 168), this protein is Probable cell division protein WhiA.